We begin with the raw amino-acid sequence, 200 residues long: Histone chaperone asf1b (200 aa).

The protein belongs to the ASF1 family. In terms of assembly, interacts with histone H3 and histone H4.

The protein localises to the nucleus. Functionally, histone chaperone that facilitates histone deposition and histone exchange and removal during nucleosome assembly and disassembly. The polypeptide is Histone chaperone asf1b (asf1b) (Xenopus tropicalis (Western clawed frog)).